Reading from the N-terminus, the 168-residue chain is Endoribonuclease YbeY (168 aa).

His-125, His-129, and His-135 together coordinate Zn(2+).

This sequence belongs to the endoribonuclease YbeY family. It depends on Zn(2+) as a cofactor.

Its subcellular location is the cytoplasm. In terms of biological role, single strand-specific metallo-endoribonuclease involved in late-stage 70S ribosome quality control and in maturation of the 3' terminus of the 16S rRNA. The polypeptide is Endoribonuclease YbeY (Rhodopseudomonas palustris (strain BisB18)).